Consider the following 129-residue polypeptide: Small ribosomal subunit protein uS8c (129 aa).

It belongs to the universal ribosomal protein uS8 family. As to quaternary structure, part of the 30S ribosomal subunit.

It is found in the plastid. Its subcellular location is the chloroplast. Functionally, one of the primary rRNA binding proteins, it binds directly to 16S rRNA central domain where it helps coordinate assembly of the platform of the 30S subunit. This Oltmannsiellopsis viridis (Marine flagellate) protein is Small ribosomal subunit protein uS8c (rps8).